A 355-amino-acid chain; its full sequence is Phosphoribosylformylglycinamidine cyclo-ligase (355 aa).

Belongs to the AIR synthase family.

The protein localises to the cytoplasm. The enzyme catalyses 2-formamido-N(1)-(5-O-phospho-beta-D-ribosyl)acetamidine + ATP = 5-amino-1-(5-phospho-beta-D-ribosyl)imidazole + ADP + phosphate + H(+). The protein operates within purine metabolism; IMP biosynthesis via de novo pathway; 5-amino-1-(5-phospho-D-ribosyl)imidazole from N(2)-formyl-N(1)-(5-phospho-D-ribosyl)glycinamide: step 2/2. The sequence is that of Phosphoribosylformylglycinamidine cyclo-ligase from Methylobacterium sp. (strain 4-46).